Consider the following 538-residue polypeptide: MGNCCGTAGSLAQNDNKPKKGRKKQNPFSIDYGLHHGGGDGGGRPLKLIVLNDPTGREIESKYTLGRELGRGEFGVTYLCTDKETDDVFACKSILKKKLRTAVDIEDVRREVEIMRHMPEHPNVVTLKETYEDEHAVHLVMELCEGGELFDRIVARGHYTERAAAAVTKTIMEVVQVCHKHGVMHRDLKPENFLFGNKKETAPLKAIDFGLSVFFKPGERFNEIVGSPYYMAPEVLKRNYGPEVDIWSAGVILYILLCGVPPFWAETEQGVAQAIIRSVLDFRRDPWPKVSENAKDLIRKMLDPDQKRRLTAQQVLDHPWLQNAKTAPNVSLGETVRARLKQFTVMNKLKKRALRVIAEHLSDEEASGIREGFQIMDTSQRGKINIDELKIGLQKLGHAIPQDDLQILMDAGDIDRDGYLDCDEFIAISVHLRKMGNDEHLKKAFAFFDQNNNGYIEIEELREALSDELGTSEEVVDAIIRDVDTDKDGRISYEEFVTMMKTGTDWRKASRQYSRERFNSISLKLMQDASLQVNGDTR.

The segment at 1-37 (MGNCCGTAGSLAQNDNKPKKGRKKQNPFSIDYGLHHG) is disordered. Residue glycine 2 is the site of N-myristoyl glycine attachment. The Protein kinase domain occupies 63–321 (YTLGRELGRG…AQQVLDHPWL (259 aa)). ATP contacts are provided by residues 69–77 (LGRGEFGVT) and lysine 92. Residue aspartate 187 is the Proton acceptor of the active site. Phosphoserine is present on serine 227. The segment at 327–357 (APNVSLGETVRARLKQFTVMNKLKKRALRVI) is autoinhibitory domain. 4 EF-hand domains span residues 364–399 (EEAS…LGHA), 400–435 (IPQD…LRKM), 436–470 (GNDE…DELG), and 471–506 (TSEE…GTDW). Residues aspartate 377, serine 379, lysine 383, glutamate 388, aspartate 413, aspartate 415, aspartate 417, tyrosine 419, glutamate 424, aspartate 449, asparagine 451, asparagine 453, tyrosine 455, glutamate 460, aspartate 484, aspartate 486, aspartate 488, and arginine 490 each contribute to the Ca(2+) site. A Phosphoserine modification is found at serine 492. Glutamate 495 lines the Ca(2+) pocket.

It belongs to the protein kinase superfamily. Ser/Thr protein kinase family. CDPK subfamily. Interacts with ABF4. Interacts with CNGC18. In terms of tissue distribution, expressed in embryos and most of the vegetative tissues.

The protein localises to the nucleus. Its subcellular location is the membrane. The catalysed reaction is L-seryl-[protein] + ATP = O-phospho-L-seryl-[protein] + ADP + H(+). It carries out the reaction L-threonyl-[protein] + ATP = O-phospho-L-threonyl-[protein] + ADP + H(+). Its activity is regulated as follows. Activated by calcium. Autophosphorylation may play an important role in the regulation of the kinase activity. In terms of biological role, may play a role in signal transduction pathways that involve calcium as a second messenger. Involved in maintaining Ca2+ homeostasis in pollen tube tips by regulating CNGC18. Functions as regulator of the calcium-mediated abscisic acid (ABA) signaling pathway. Phosphorylates ABA-responsive transcription factor ABF4 in vitro. This Arabidopsis thaliana (Mouse-ear cress) protein is Calcium-dependent protein kinase 32.